The sequence spans 752 residues: Palmitoyltransferase AKR1 (752 aa).

Disordered stretches follow at residues 1–21 and 49–68; these read MTAEEVDKESDPAIEDVKSDY and ASSELKHENDQGEERDLGSV. At 1–318 the chain is on the cytoplasmic side; that stretch reads MTAEEVDKES…FPLPQYFSAS (318 aa). Basic and acidic residues-rich tracts occupy residues 9–21 and 51–68; these read ESDPAIEDVKSDY and SELKHENDQGEERDLGSV. 6 ANK repeats span residues 72-102, 108-137, 142-171, 175-208, 212-241, and 245-274; these read PILERYHAACKQGDMKTLREMVESKVIDLSN, ERVSGLHWACINNRLSAVKYLAGAGAEVNF, LDATPLHWASKSGLVYIVDELLKAGADPNI, QGYNLLHTSVFSSNIMLVIYVLFFVVDGKEDVDQ, HQRTALQWATYQADALTVENLLKFNADVKN, and AGFTALHWGTVKGSIPVMDLLIKHGSDFFQ. A helical membrane pass occupies residues 319-339; the sequence is TGKMLTFFLPWVLIPLVFYIF. Topologically, residues 340–341 are lumenal; the sequence is SK. A helical transmembrane segment spans residues 342-362; it reads ITFFIALLINTIVLVISGLVL. The Cytoplasmic segment spans residues 363-380; it reads SRLVVPSYLLSKRHPILN. Residues 381–401 traverse the membrane as a helical segment; sequence SPLLAGILSGTIAIAFFIWFT. The Lumenal portion of the chain corresponds to 402–412; the sequence is KISILTFTEKP. A helical membrane pass occupies residues 413–433; sequence VGNIIMLGFFIGLITLFIGLM. Residues 434-509 lie on the Cytoplasmic side of the membrane; the sequence is KSDPGYIPGT…YNQIGLLNHK (76 aa). Residues 466–516 form the DHHC domain; that stretch reads HFCVHTWIRIPLRSKYDRDSACLISAFDHFCPWVYNQIGLLNHKLFYMFVV. The S-palmitoyl cysteine intermediate role is filled by Cys-496. The helical transmembrane segment at 510 to 530 threads the bilayer; that stretch reads LFYMFVVLLEISVWWFLPLMM. The Lumenal segment spans residues 531 to 567; the sequence is EYFDELEDYLENRKGKHFGDCHFLGDEDLCFGLHHDT. Residues 568-588 form a helical membrane-spanning segment; sequence FNFLLLCWVIFQAFWVLCLIA. The Cytoplasmic segment spans residues 589-752; that stretch reads VQTVQMLKGV…TLPNATEELV (164 aa).

It belongs to the DHHC palmitoyltransferase family. AKR/ZDHHC17 subfamily.

It localises to the early endosome membrane. The protein resides in the golgi apparatus membrane. The catalysed reaction is L-cysteinyl-[protein] + hexadecanoyl-CoA = S-hexadecanoyl-L-cysteinyl-[protein] + CoA. Functionally, palmitoyltransferase specific for casein kinase 1. The sequence is that of Palmitoyltransferase AKR1 (AKR1) from Kluyveromyces lactis (strain ATCC 8585 / CBS 2359 / DSM 70799 / NBRC 1267 / NRRL Y-1140 / WM37) (Yeast).